A 317-amino-acid polypeptide reads, in one-letter code: Melanocyte-stimulating hormone receptor (317 aa).

A disordered region spans residues 1–26 (MPVQGSPRSLLGAVNSTPTATPHLRP). Over 1–37 (MPVQGSPRSLLGAVNSTPTATPHLRPAANQTGPQCLE) the chain is Extracellular. The N-linked (GlcNAc...) asparagine glycan is linked to asparagine 29. A helical membrane pass occupies residues 38–63 (VSIPDGLFLCLGLVSLVENTLVVAAI). Topologically, residues 64–72 (AKNRNLHSP) are cytoplasmic. Residues 73-93 (MYCFVCCLALSDLLVSVSSVL) traverse the membrane as a helical segment. Topologically, residues 94–118 (ETAVLLLLGAGALAAQATVVQLLGN) are extracellular. The helical transmembrane segment at 119–140 (VIDVLLCSSMVSSLFFLGAIAM) threads the bilayer. The Cytoplasmic portion of the chain corresponds to 141–163 (DRYISIFYALRYHSIVTLARARR). The chain crosses the membrane as a helical span at residues 164-183 (AIAAIWAASMLSSTLFIAYC). The Extracellular portion of the chain corresponds to 184–191 (DHTAALLC). A helical membrane pass occupies residues 192 to 211 (LVVFFLAMLVLMAVLYVHML). Over 212–240 (TQACQHAQGIARLHKRQRPVQQGWGLKGA) the chain is Cytoplasmic. The chain crosses the membrane as a helical span at residues 241–266 (ATLAILLGVFFLCWGPFFLHLTLIAV). Over 267–279 (CPQHPTCSCIFKN) the chain is Extracellular. A helical transmembrane segment spans residues 280-300 (FRLFLALIVCNAIVDPLIYAF). Topologically, residues 301 to 317 (RSQELCKTLKELLLFSW) are cytoplasmic.

Belongs to the G-protein coupled receptor 1 family. Interacts with MGRN1, but does not undergo MGRN1-mediated ubiquitination; this interaction competes with GNAS-binding and thus inhibits agonist-induced cAMP production. Interacts with OPN3; the interaction results in a decrease in MC1R-mediated cAMP signaling and ultimately a decrease in melanin production in melanocytes.

The protein localises to the cell membrane. In terms of biological role, receptor for MSH (alpha, beta and gamma) and ACTH. The activity of this receptor is mediated by G proteins which activate adenylate cyclase. Mediates melanogenesis, the production of eumelanin (black/brown) and phaeomelanin (red/yellow), via regulation of cAMP signaling in melanocytes. The protein is Melanocyte-stimulating hormone receptor (MC1R) of Hapalemur griseus (Gray gentle lemur).